The sequence spans 279 residues: Phenylalanine 3-hydroxylase (279 aa).

Fe cation-binding residues include H140, H145, and E186.

It belongs to the biopterin-dependent aromatic amino acid hydroxylase family. It depends on Fe(2+) as a cofactor.

It catalyses the reaction (6R)-L-erythro-5,6,7,8-tetrahydrobiopterin + L-phenylalanine + O2 = 3-hydroxy-L-phenylalanine + (4aS,6R)-4a-hydroxy-L-erythro-5,6,7,8-tetrahydrobiopterin. In vitro, catalyzes the highly regiospecific C-3 hydroxylation of L-phenylalanine (L-Phe) to yield 3-hydroxy-L-phenylalanine (meta-Tyr), an amino acid found in bacterial secondary metabolites such as sanglifehrin A and some pacidamycins. Tetrahydrobiopterin (BH4) seems to be the physiological pterin, however the hydroxylase is also able to use 6-methyltetrahydropterin (6-MePH4). This is Phenylalanine 3-hydroxylase from Streptomyces coeruleorubidus.